The sequence spans 786 residues: Pentatricopeptide repeat-containing protein At2g22070 (786 aa).

PPR repeat units follow at residues 48 to 78, 79 to 109, 110 to 144, 145 to 179, 180 to 214, 215 to 241, 242 to 276, 278 to 312, 313 to 347, 350 to 376, 377 to 411, 412 to 446, 447 to 477, 479 to 513, 514 to 548, and 550 to 580; these read SVYL…MPLR, TAFS…LPQR, DSVS…GIEP, TQFT…GLRG, NVSV…DISS, WNAM…MAER, DIVT…SLLS, DRFT…GFDI, SGIV…DLKI, FTAL…LKDR, DVVA…GQRP, NSYT…GEIY, SVSV…IRCE, DTVS…GLRP, DHIT…DKII, and TLSH…MPIE. Residues 585–660 are type E motif; it reads TWGSLLSACR…EQGFSWIEVK (76 aa). The interval 661–691 is type E(+) motif; it reads HKVHVFGVEDGTHPEKNEIYMTMKKIWDEIK. Residues 692 to 786 form a type DYW motif region; sequence KMGYVPDTAS…DGFCSCRDYW (95 aa).

The protein belongs to the PPR family. PCMP-H subfamily.

The sequence is that of Pentatricopeptide repeat-containing protein At2g22070 (PCMP-H41) from Arabidopsis thaliana (Mouse-ear cress).